The following is a 330-amino-acid chain: Glycerol-3-phosphate dehydrogenase [NAD(P)+] (330 aa).

NADPH contacts are provided by tryptophan 13, arginine 33, and lysine 103. 3 residues coordinate sn-glycerol 3-phosphate: lysine 103, glycine 131, and threonine 133. Alanine 135 lines the NADPH pocket. Positions 186, 239, 249, 250, and 251 each coordinate sn-glycerol 3-phosphate. Lysine 186 acts as the Proton acceptor in catalysis. Arginine 250 provides a ligand contact to NADPH. Residues valine 274 and glutamate 276 each coordinate NADPH.

Belongs to the NAD-dependent glycerol-3-phosphate dehydrogenase family.

Its subcellular location is the cytoplasm. It catalyses the reaction sn-glycerol 3-phosphate + NAD(+) = dihydroxyacetone phosphate + NADH + H(+). It carries out the reaction sn-glycerol 3-phosphate + NADP(+) = dihydroxyacetone phosphate + NADPH + H(+). It participates in membrane lipid metabolism; glycerophospholipid metabolism. Catalyzes the reduction of the glycolytic intermediate dihydroxyacetone phosphate (DHAP) to sn-glycerol 3-phosphate (G3P), the key precursor for phospholipid synthesis. This chain is Glycerol-3-phosphate dehydrogenase [NAD(P)+], found in Erythrobacter litoralis (strain HTCC2594).